The sequence spans 396 residues: L-lactate dehydrogenase (396 aa).

One can recognise an FMN hydroxy acid dehydrogenase domain in the interval 1 to 380 (MIISAASDYR…SGDSLVQELG (380 aa)). Substrate is bound at residue Tyr-24. The FMN site is built by Ser-106 and Gln-127. Tyr-129 lines the substrate pocket. FMN is bound at residue Thr-155. Arg-164 contributes to the substrate binding site. FMN is bound at residue Lys-251. Residue His-275 is the Proton acceptor of the active site. Arg-278 contributes to the substrate binding site. 306–330 (DSGIRNGLDVVRMIALGADTVLLGR) contributes to the FMN binding site.

The protein belongs to the FMN-dependent alpha-hydroxy acid dehydrogenase family. FMN serves as cofactor.

It is found in the cell inner membrane. It carries out the reaction (S)-lactate + A = pyruvate + AH2. Its function is as follows. Catalyzes the conversion of L-lactate to pyruvate. Is coupled to the respiratory chain. This is L-lactate dehydrogenase from Salmonella heidelberg (strain SL476).